A 488-amino-acid polypeptide reads, in one-letter code: Diacylglycerol O-acyltransferase 1 (488 aa).

A disordered region spans residues 1 to 57; it reads MGDRGSSRRRRTGSRPSSHGGGGPAAAEEEVRDAAAGPDVGAAGDAPAPAPNKDGDA. Residues 1–83 lie on the Cytoplasmic side of the membrane; sequence MGDRGSSRRR…SLFSSDSGFS (83 aa). The tract at residues 1-91 is involved in homomerization; the sequence is MGDRGSSRRR…FSNYRGILNW (91 aa). S17 and S18 each carry phosphoserine. Over residues 34 to 47 the composition is skewed to low complexity; it reads AAAGPDVGAAGDAP. The chain crosses the membrane as a helical span at residues 84–118; sequence NYRGILNWCVVMLILSNARLFLENLIKYGILVDPI. Over 119-130 the chain is Lumenal; the sequence is QVVSLFLKDPYS. The extracellular loop 1 (EL1) stretch occupies residues 119–130; it reads QVVSLFLKDPYS. The chain crosses the membrane as a helical span at residues 131–156; sequence WPAPCLVIAANVFAVAAFQVEKRLAV. The tract at residues 131–488 is MBOAT fold; that stretch reads WPAPCLVIAA…LNYEAPAAEA (358 aa). Residues 157–161 are Cytoplasmic-facing; it reads GALTE. The helical transmembrane segment at 162–184 threads the bilayer; sequence QAGLLLHVANLATILCFPAAVVL. Over 185–191 the chain is Lumenal; sequence LVESITP. A helical membrane pass occupies residues 192-223; that stretch reads VGSLLALMAHTILFLKLFSYRDVNSWCRRARA. Over 224 to 273 the chain is Cytoplasmic; that stretch reads KAASAGKKASSAAAPHTVSYPDNLTYRDLYYFLFAPTLCYELNFPRSPRI. Residues 224 to 276 form an intracellular loop 1 (IL1) region; it reads KAASAGKKASSAAAPHTVSYPDNLTYRDLYYFLFAPTLCYELNFPRSPRIRKR. Residues 274 to 308 form a helical membrane-spanning segment; sequence RKRFLLRRILEMLFFTQLQVGLIQQWMVPTIQNSM. The Lumenal portion of the chain corresponds to 309 to 315; that stretch reads KPFKDMD. A helical transmembrane segment spans residues 316–353; that stretch reads YSRIIERLLKLAVPNHLIWLIFFYWLFHSCLNAVAELM. At 354–399 the chain is on the cytoplasmic side; sequence QFGDREFYRDWWNSESVTYFWQNWNIPVHKWCIRHFYKPMLRRGSS. The intracellular loop 2 (IL2) stretch occupies residues 354 to 399; it reads QFGDREFYRDWWNSESVTYFWQNWNIPVHKWCIRHFYKPMLRRGSS. The FYXDWWN motif signature appears at 360–366; sequence FYRDWWN. Residues 374-382, Y390, and R404 contribute to the an acyl-CoA site; that span reads WQNWNIPVH. Residues 380–394 form an amphipathic helix (AH) region; the sequence is PVHKWCIRHFYKPML. A helical transmembrane segment spans residues 400-420; that stretch reads KWMARTGVFLASAFFHEYLVS. Residue H415 is part of the active site. At 421 to 428 the chain is on the lumenal side; it reads VPLRMFRL. Residues 429–447 traverse the membrane as a helical segment; that stretch reads WAFTGMMAQIPLAWFVGRF. The Cytoplasmic portion of the chain corresponds to 448 to 449; it reads FQ. A helical transmembrane segment spans residues 450–481; it reads GNYGNAAVWLSLIIGQPIAVLMYVHDYYVLNY. Y477 contributes to the an acyl-CoA binding site. The Lumenal segment spans residues 482-488; it reads EAPAAEA.

The protein belongs to the membrane-bound acyltransferase family. Sterol o-acyltransferase subfamily. In terms of assembly, homodimer or homotetramer; both forms have similar enzymatic activities.

The protein resides in the endoplasmic reticulum membrane. It carries out the reaction an acyl-CoA + a 1,2-diacyl-sn-glycerol = a triacyl-sn-glycerol + CoA. The enzyme catalyses all-trans-retinol + an acyl-CoA = an all-trans-retinyl ester + CoA. It catalyses the reaction 2-(9Z-octadecenoyl)-glycerol + (9Z)-octadecenoyl-CoA = 1,2-di-(9Z-octadecenoyl)-sn-glycerol + CoA. The catalysed reaction is 1,2-di-(9Z-octadecenoyl)-sn-glycerol + (9Z)-octadecenoyl-CoA = 1,2,3-tri-(9Z-octadecenoyl)-glycerol + CoA. It carries out the reaction all-trans-retinol + hexadecanoyl-CoA = all-trans-retinyl hexadecanoate + CoA. The enzyme catalyses 1-O-(9Z-octadecenyl)-glycerol + (9Z)-octadecenoyl-CoA = 1-O-(9Z-octadecyl)-3-(9Z-octadecenoyl)-glycerol + CoA. It catalyses the reaction 1-O-(9Z-octadecyl)-3-(9Z-octadecenoyl)-glycerol + (9Z)-octadecenoyl-CoA = 1-O-(9Z-octadecenyl)-2,3-di-(9Z-octadecenoyl)glycerol + CoA. The catalysed reaction is 1-(9Z-octadecenoyl)-glycerol + (9Z)-octadecenoyl-CoA = 1,2-di-(9Z-octadecenoyl)-glycerol + CoA. It carries out the reaction 1,2-di-(9Z-octadecenoyl)-glycerol + (9Z)-octadecenoate + H(+) = 1,2,3-tri-(9Z-octadecenoyl)-glycerol + H2O. The enzyme catalyses 1-octadecanoyl-2-(5Z,8Z,11Z,14Z-eicosatetraenoyl)-sn-glycerol + (9Z)-octadecenoyl-CoA = 1-octadecanoyl-2-(5Z,8Z,11Z,14Z)-eicosatetraenoyl-3-(9Z)-octadecenoyl-sn-glycerol + CoA. It catalyses the reaction hexadecane-1,2-diol + 2 hexadecanoyl-CoA = 1,2-O,O-dihexadecanoyl-1,2-hexadecanediol + 2 CoA. The catalysed reaction is hexadecane-1,2-diol + hexadecanoyl-CoA = 2-hydroxyhexadecyl hexadecanoate + CoA. It carries out the reaction 2-(9Z-octadecenoyl)-glycerol + hexadecanoyl-CoA = 1-hexadecanoyl-2-(9Z-octadecenoyl)-sn-glycerol + CoA. The enzyme catalyses 1,2-di-(9Z-octadecenoyl)-sn-glycerol + hexadecanoyl-CoA = 1,2-di-(9Z)-octadecenoyl-3-hexadecanoyl-sn-glycerol + CoA. It catalyses the reaction hexadecan-1-ol + hexadecanoyl-CoA = hexadecanyl hexadecanoate + CoA. The catalysed reaction is 13-cis-retinol + hexadecanoyl-CoA = 13-cis-retinyl hexadecanoate + CoA. It carries out the reaction 1,3-di-(9Z-octadecenoyl)-glycerol + (9Z)-octadecenoyl-CoA = 1,2,3-tri-(9Z-octadecenoyl)-glycerol + CoA. The enzyme catalyses 2,3-di-(9Z)-octadecenoyl-sn-glycerol + (9Z)-octadecenoyl-CoA = 1,2,3-tri-(9Z-octadecenoyl)-glycerol + CoA. It participates in lipid metabolism; glycerolipid metabolism. XP620 is a selective DGAT1 inhibitor. In terms of biological role, catalyzes the terminal and only committed step in triacylglycerol synthesis by using diacylglycerol and fatty acyl CoA as substrates. Highly expressed in epithelial cells of the small intestine and its activity is essential for the absorption of dietary fats. In liver, plays a role in esterifying exogenous fatty acids to glycerol, and is required to synthesize fat for storage. Also present in female mammary glands, where it produces fat in the milk. May be involved in VLDL (very low density lipoprotein) assembly. In contrast to DGAT2 it is not essential for survival. Functions as the major acyl-CoA retinol acyltransferase (ARAT) in the skin, where it acts to maintain retinoid homeostasis and prevent retinoid toxicity leading to skin and hair disorders. Exhibits additional acyltransferase activities, includin acyl CoA:monoacylglycerol acyltransferase (MGAT), wax monoester and wax diester synthases. Also able to use 1-monoalkylglycerol (1-MAkG) as an acyl acceptor for the synthesis of monoalkyl-monoacylglycerol (MAMAG). This chain is Diacylglycerol O-acyltransferase 1, found in Homo sapiens (Human).